A 347-amino-acid chain; its full sequence is NADH-ubiquinone oxidoreductase chain 2 (347 aa).

10 helical membrane passes run 13–33 (IFTG…WLGL), 55–75 (AAIK…MAIL), 96–116 (LMIV…FWVP), 122–142 (VPLT…ISIM), 151–171 (TNIL…GGLN), 178–198 (ILAY…PYNP), 199–219 (DITI…FLIL), 237–257 (LTWL…LPPL), 274–294 (GNLI…YFYV), and 326–346 (LPTL…ILSI).

Belongs to the complex I subunit 2 family. Core subunit of respiratory chain NADH dehydrogenase (Complex I) which is composed of 45 different subunits. Interacts with TMEM242.

The protein localises to the mitochondrion inner membrane. The enzyme catalyses a ubiquinone + NADH + 5 H(+)(in) = a ubiquinol + NAD(+) + 4 H(+)(out). Its function is as follows. Core subunit of the mitochondrial membrane respiratory chain NADH dehydrogenase (Complex I) which catalyzes electron transfer from NADH through the respiratory chain, using ubiquinone as an electron acceptor. Essential for the catalytic activity and assembly of complex I. This is NADH-ubiquinone oxidoreductase chain 2 from Pongo abelii (Sumatran orangutan).